The chain runs to 239 residues: tRNA (guanine-N(7)-)-methyltransferase (239 aa).

4 residues coordinate S-adenosyl-L-methionine: Glu-69, Glu-94, Asp-121, and Asp-144. Asp-144 is a catalytic residue. Lys-148 contacts substrate. The segment at 150-155 (RHNKRR) is interaction with RNA. Residues Asp-180 and 217-220 (TKFE) contribute to the substrate site.

It belongs to the class I-like SAM-binding methyltransferase superfamily. TrmB family. Monomer.

It catalyses the reaction guanosine(46) in tRNA + S-adenosyl-L-methionine = N(7)-methylguanosine(46) in tRNA + S-adenosyl-L-homocysteine. The protein operates within tRNA modification; N(7)-methylguanine-tRNA biosynthesis. In terms of biological role, catalyzes the formation of N(7)-methylguanine at position 46 (m7G46) in tRNA. The polypeptide is tRNA (guanine-N(7)-)-methyltransferase (Shigella boydii serotype 4 (strain Sb227)).